We begin with the raw amino-acid sequence, 62 residues long: Photosystem II reaction center protein Z (62 aa).

The next 2 helical transmembrane spans lie at 8-28 (AVFALIATSLILVIGVPVVFA) and 41-61 (FSGTSLWIGLVFLVGILNSLI).

This sequence belongs to the PsbZ family. PSII is composed of 1 copy each of membrane proteins PsbA, PsbB, PsbC, PsbD, PsbE, PsbF, PsbH, PsbI, PsbJ, PsbK, PsbL, PsbM, PsbT, PsbY, PsbZ, Psb30/Ycf12, at least 3 peripheral proteins of the oxygen-evolving complex and a large number of cofactors. It forms dimeric complexes.

It localises to the plastid. The protein resides in the chloroplast thylakoid membrane. Its function is as follows. May control the interaction of photosystem II (PSII) cores with the light-harvesting antenna, regulates electron flow through the 2 photosystem reaction centers. PSII is a light-driven water plastoquinone oxidoreductase, using light energy to abstract electrons from H(2)O, generating a proton gradient subsequently used for ATP formation. The polypeptide is Photosystem II reaction center protein Z (Piper cenocladum (Ant piper)).